The sequence spans 85 residues: Large ribosomal subunit protein bL27 (85 aa).

The disordered stretch occupies residues methionine 1–arginine 25.

This sequence belongs to the bacterial ribosomal protein bL27 family.

The sequence is that of Large ribosomal subunit protein bL27 from Roseiflexus castenholzii (strain DSM 13941 / HLO8).